The primary structure comprises 89 residues: Small ribosomal subunit protein uS15 (89 aa).

This sequence belongs to the universal ribosomal protein uS15 family. As to quaternary structure, part of the 30S ribosomal subunit. Forms a bridge to the 50S subunit in the 70S ribosome, contacting the 23S rRNA.

Its function is as follows. One of the primary rRNA binding proteins, it binds directly to 16S rRNA where it helps nucleate assembly of the platform of the 30S subunit by binding and bridging several RNA helices of the 16S rRNA. Functionally, forms an intersubunit bridge (bridge B4) with the 23S rRNA of the 50S subunit in the ribosome. In Pseudomonas putida (strain ATCC 700007 / DSM 6899 / JCM 31910 / BCRC 17059 / LMG 24140 / F1), this protein is Small ribosomal subunit protein uS15.